Consider the following 535-residue polypeptide: CTP synthase (535 aa).

An amidoligase domain region spans residues 1-267; it reads MTKYIFVTGG…DQIVCDHLKL (267 aa). S13 is a CTP binding site. Position 13 (S13) interacts with UTP. 14-19 serves as a coordination point for ATP; it reads SLGKGI. Residue Y54 participates in L-glutamine binding. D71 contributes to the ATP binding site. Mg(2+)-binding residues include D71 and E141. CTP-binding positions include 148–150, 188–193, and K224; these read DIE and KTKPTQ. UTP is bound by residues 188–193 and K224; that span reads KTKPTQ. 240–242 lines the ATP pocket; the sequence is RDA. The Glutamine amidotransferase type-1 domain occupies 292 to 534; that stretch reads KIALVGKYVE…VSASITNKES (243 aa). G354 is a binding site for L-glutamine. The active-site Nucleophile; for glutamine hydrolysis is C381. L-glutamine-binding positions include 382 to 385, E405, and R462; that span reads LGMQ. Residues H507 and E509 contribute to the active site.

The protein belongs to the CTP synthase family. As to quaternary structure, homotetramer.

It carries out the reaction UTP + L-glutamine + ATP + H2O = CTP + L-glutamate + ADP + phosphate + 2 H(+). The catalysed reaction is L-glutamine + H2O = L-glutamate + NH4(+). It catalyses the reaction UTP + NH4(+) + ATP = CTP + ADP + phosphate + 2 H(+). Its pathway is pyrimidine metabolism; CTP biosynthesis via de novo pathway; CTP from UDP: step 2/2. Allosterically activated by GTP, when glutamine is the substrate; GTP has no effect on the reaction when ammonia is the substrate. The allosteric effector GTP functions by stabilizing the protein conformation that binds the tetrahedral intermediate(s) formed during glutamine hydrolysis. Inhibited by the product CTP, via allosteric rather than competitive inhibition. Catalyzes the ATP-dependent amination of UTP to CTP with either L-glutamine or ammonia as the source of nitrogen. Regulates intracellular CTP levels through interactions with the four ribonucleotide triphosphates. This is CTP synthase from Bacillus mycoides (strain KBAB4) (Bacillus weihenstephanensis).